The following is a 293-amino-acid chain: Non-homologous end joining protein Ku (293 aa).

The 186-residue stretch at Ile10 to Ala195 folds into the Ku domain. Residues Ser216 to Lys229 are required for dimerization. The interval Arg260–Ala293 is disordered. Positions Gly265 to Gly280 are enriched in basic and acidic residues.

This sequence belongs to the prokaryotic Ku family. As to quaternary structure, homodimer, may form higher-order multimers on DNA. Non-dimerized protein does not stimulate LigD ligase activity. Probably interacts with LigD.

Functionally, with LigD forms a non-homologous end joining (NHEJ) DNA repair enzyme, which repairs dsDNA breaks with reduced fidelity. Stimulates rNTP addition to DSB and end joining (ligation) of linear DNA by LigD, on 3'-overhangs and probably also 5'-overhangs and blunt dsDNA breaks. Binds both ends of linear dsDNA protecting it from exonuclease activity. The chain is Non-homologous end joining protein Ku from Pseudomonas aeruginosa (strain ATCC 15692 / DSM 22644 / CIP 104116 / JCM 14847 / LMG 12228 / 1C / PRS 101 / PAO1).